The chain runs to 464 residues: Putative F-box/LRR-repeat protein At3g59160 (464 aa).

Residues 12–60 (KDMINDLPDALLCHVLSYLTTKEAASTSLLSRRWRYLLAFVPNLEFDDS) enclose the F-box domain. 6 LRR repeats span residues 172 to 198 (TLKIRDGPPIDVKHVHLPKLKTLHLES), 200 to 225 (MFDEEDIGFSKLLSGCPELEELVLHH), 233 to 258 (SCSVSVATLKRLTFCCNNMKFCGMHE), 336 to 367 (VLCLSADTLEVLTYCCKQIPIFNNLTHVTIQS), 368 to 393 (TPKVGWKSLLKLLKNSPKLQTLVFQG), and 408 to 433 (KIEKQIEKVKHFLETMPHLEQLVLHY).

The chain is Putative F-box/LRR-repeat protein At3g59160 from Arabidopsis thaliana (Mouse-ear cress).